Consider the following 251-residue polypeptide: CDP-diacylglycerol pyrophosphatase (251 aa).

Residues 4–24 (AGLLFLVMIVIAVVAAGIGYW) form a helical membrane-spanning segment.

It belongs to the Cdh family.

It is found in the cell inner membrane. The catalysed reaction is a CDP-1,2-diacyl-sn-glycerol + H2O = a 1,2-diacyl-sn-glycero-3-phosphate + CMP + 2 H(+). It functions in the pathway phospholipid metabolism; CDP-diacylglycerol degradation; phosphatidate from CDP-diacylglycerol: step 1/1. This Shigella boydii serotype 4 (strain Sb227) protein is CDP-diacylglycerol pyrophosphatase.